A 219-amino-acid chain; its full sequence is Chloramphenicol acetyltransferase (219 aa).

Residue histidine 190 is the Proton acceptor of the active site.

Belongs to the chloramphenicol acetyltransferase family. Homotrimer.

It catalyses the reaction chloramphenicol + acetyl-CoA = chloramphenicol 3-acetate + CoA. Functionally, this enzyme is an effector of chloramphenicol resistance in bacteria. The polypeptide is Chloramphenicol acetyltransferase (catB) (Clostridium butyricum).